The sequence spans 190 residues: High affinity copper uptake protein 1 (190 aa).

The segment at 1–35 is disordered; that stretch reads MDHSHHMGMSYMDSNSTMQPSHHHPTTSASHSHGG. Residues 1–61 lie on the Extracellular side of the membrane; it reads MDHSHHMGMS…KNVELLFSGL (61 aa). Positions 5–6 match the Bis-His motif motif; it reads HH. Residues 7–12 carry the Methionine segments (Mets) motif motif; that stretch reads MGMSYM. The N-linked (GlcNAc...) asparagine glycan is linked to N15. The segment covering 26-35 has biased composition (low complexity); the sequence is TTSASHSHGG. T27 carries O-linked (GalNAc...) threonine glycosylation. The chain crosses the membrane as a helical span at residues 62-82; that stretch reads VINTAGEMAGAFVAVFLLAMF. Residues 83-132 lie on the Cytoplasmic side of the membrane; it reads YEGLKIARESLLRKSQVSIRYNSMPVPGPNGTILMETHKTVGQQMLSFPH. Phosphothreonine is present on T114. Residues 133-153 traverse the membrane as a helical segment; the sequence is LLQTVLHIIQVVISYFLMLIF. At 154-156 the chain is on the extracellular side; the sequence is MTY. A helical transmembrane segment spans residues 157–177; the sequence is NGYLCIAVAAGAGTGYFLFSW. At 178-190 the chain is on the cytoplasmic side; that stretch reads KKAVVVDITEHCH. C189 carries the post-translational modification Cysteine sulfenic acid (-SOH).

The protein belongs to the copper transporter (Ctr) (TC 1.A.56) family. SLC31A subfamily. As to quaternary structure, homotrimer; is stabilized by cisplatin via interactions between cisplatin and the methionine-rich clusters, and could be crucial for the copper(2+) reduction process and copper(1+) stabilization. Heterotrimer between SLC31A1, CCS and SOD1; this heterotrimer is copper(1+)-mediated and its maintenance is regulated through SOD1 activation. Interacts with KDR; this interaction is induced upon VEGFA stimulation leading to SLC31A1 and KDR subsequent co-internalization to early endosomes, thereby activating KDR downstream signaling in endothelial cells. Interacts (via C-terminal domain) with ATOX1 (via dimer form); this interaction improves ATOX1 stability and controls intracellular copper(1+) levels. Interacts with SLC31A2; this interaction stabilizes SLC31A2 and protects its from ubiquitination and degradation. Interacts (via C-terminal domain) with CCS; this interaction is copper(1+)-mediated. O-Glycosylation at Thr-27 protects from proteolytic cleavage in the N-terminal extracellular domain. Post-translationally, proteolytic cleavage, leading to a truncated form, is facilitated by SLC31A2 and initiated preferentially by CTSL and to a minor extend by CTSB in endolysosomal compartments. In vitro, is cleaved by CTSL/cathepsin L between residues 8 and 9 from the amino terminus. A post-CTSL/cathepsin L processing occurs to yield to the fully truncated form. In terms of processing, sulfenylated at Cys-189 after stimulation with VEGFA, which induces SLC31A1-KDR disulfide bond formation and their co-internalization to early endosomes, driving to a sustained VEGFR2 signaling.

The protein localises to the cell membrane. The protein resides in the early endosome membrane. It is found in the recycling endosome membrane. It localises to the apical cell membrane. Its subcellular location is the late endosome membrane. The protein localises to the basolateral cell membrane. It carries out the reaction Ag(+)(out) = Ag(+)(in). The enzyme catalyses Cu(+)(out) = Cu(+)(in). Its activity is regulated as follows. Copper(1+) transport is stimulated by extracellular acidic pH and high potassium ions concentrations. Copper(1+) import is regulated by a copper(1+)-dependent recycling of SLC31A1. Uniporter that mediates the transport of copper(1+) from the extracellular space to the cytoplasm, across the plasma membrane and delivers directly copper(1+) to specific chaperone such as ATOX1, via a copper(1+)- mediated transient interaction between the C-terminal domain and a copper(1+) chaperone, thus controlling intracellular copper(1+) levels. May function in copper(1+) import from the apical membrane thus may drive intestinal copper absorption. The copper(1+) transport mechanism is sodium-independent, saturable and of high-affinity. Also mediates the uptake of silver(1+). May function in the influx of the platinum-containing chemotherapeutic agents. The platinum-containing chemotherapeutic agents uptake is saturable. In vitro, mediates the transport of cadmium(2+) into cells. Also participates in the first step of copper(2+) acquisition by cells through a direct transfer of copper(2+) from copper(2+) carriers in blood, such as ALB to the N-terminal domain of SLC31A1, leading to copper(2+) reduction and probably followed by copper(1+) stabilization. In addition, functions as a redox sensor to promote angiogenesis in endothelial cells, in a copper(1+) transport independent manner, by transmitting the VEGF-induced ROS signal through a sulfenylation at Cys-189 leadin g to a subsequent disulfide bond formation between SLC31A1 and KDR. The SLC31A1-KDR complex is then co-internalized to early endosomes, driving a sustained VEGFR2 signaling. In terms of biological role, mobilizes copper(1+) out of the endosomal compartment, making copper(1+) available for export out of the cells. The chain is High affinity copper uptake protein 1 from Homo sapiens (Human).